The chain runs to 123 residues: DNA-directed RNA polymerase subunit omega (123 aa).

The interval 72–100 (QRVLPSEDEEDAAREERGQQMEALPAPPV) is disordered.

Belongs to the RNA polymerase subunit omega family. The RNAP catalytic core consists of 2 alpha, 1 beta, 1 beta' and 1 omega subunit. When a sigma factor is associated with the core the holoenzyme is formed, which can initiate transcription.

It catalyses the reaction RNA(n) + a ribonucleoside 5'-triphosphate = RNA(n+1) + diphosphate. Its function is as follows. Promotes RNA polymerase assembly. Latches the N- and C-terminal regions of the beta' subunit thereby facilitating its interaction with the beta and alpha subunits. This is DNA-directed RNA polymerase subunit omega from Maricaulis maris (strain MCS10) (Caulobacter maris).